The chain runs to 520 residues: MENTDVFLGLHDFLERMRKPSAGDFVKSIKSFIVSFSNNAPDPEKDCAMVQEFFSKMEAAFRAHPLWSGCSEEELDSAGDGLEKYVMTKLFTRVFASNTEEVIADEKLFQKMSLVQQFISPENLDIQPTFQNESSWLLAQKELQKINMYKAPRDKLVCILNCCKVINNLLLNASIASNENAPGADEFLPVLIYVTIKANPPQLHSNLLYIQRYRRESKLVGEAAYFFTNILSAESFISNIDAKSISLDEAEFEKNMESARARISGLDSQTYQTGHGSAPPPRDESTLQKTQSLNPKRENTLFQSKSSDSLSGTNELLNINSETPMKKAESISDLENKGATLLKDTEPSKVFQEYPYIFASAGDLRIGDVEGLLNSYKQLVFKYVCLTKGLGDGTSLAPSSSPLQASSGFNTSKESEDHRRSSSDVQMTKETDRSVDDLIRALHGEGEDVNNLSDVKHEEYGAMLVEGKDEERDSKVQGEVDAKDIELMKQIPKREGDNSSSRPAEDEDVGSKQPVTEASE.

One can recognise a VPS9 domain in the interval 102-246; the sequence is VIADEKLFQK…ISNIDAKSIS (145 aa). Positions 180 and 185 each coordinate GTP. Disordered stretches follow at residues 267–331, 396–433, and 464–520; these read DSQT…AESI, LAPSSSPLQASSGFNTSKESEDHRRSSSDVQMTKETDR, and LVEG…EASE. Polar residues predominate over residues 287-323; sequence LQKTQSLNPKRENTLFQSKSSDSLSGTNELLNINSET. S330 is subject to Phosphoserine. Low complexity predominate over residues 396-407; the sequence is LAPSSSPLQASS. 2 stretches are compositionally biased toward basic and acidic residues: residues 413-433 and 464-497; these read KESEDHRRSSSDVQMTKETDR and LVEGKDEERDSKVQGEVDAKDIELMKQIPKREGD.

As to quaternary structure, homodimer. The homodimer interacts with RABF2B. Interacts with RABF1 and RABF2A. In terms of tissue distribution, widely expressed.

Functionally, functions as a guanine nucleotide exchange factor (GEF) for Rab small GTPases. Activates specifically RABF1, RABF2A and RABF2B proteins. Required for early stages of embryogenesis, cytokinesis, embryogenesis, and organ development. Is essential for the establishment or maintenance of the polar localization of the auxin efflux carrier PIN1. This is Vacuolar protein sorting-associated protein 9A from Arabidopsis thaliana (Mouse-ear cress).